The chain runs to 523 residues: Bifunctional purine biosynthesis protein PurH (523 aa).

One can recognise an MGS-like domain in the interval 1–145; the sequence is MIKQALLSVS…KNHRDVTVIV (145 aa).

It belongs to the PurH family.

The enzyme catalyses (6R)-10-formyltetrahydrofolate + 5-amino-1-(5-phospho-beta-D-ribosyl)imidazole-4-carboxamide = 5-formamido-1-(5-phospho-D-ribosyl)imidazole-4-carboxamide + (6S)-5,6,7,8-tetrahydrofolate. It carries out the reaction IMP + H2O = 5-formamido-1-(5-phospho-D-ribosyl)imidazole-4-carboxamide. The protein operates within purine metabolism; IMP biosynthesis via de novo pathway; 5-formamido-1-(5-phospho-D-ribosyl)imidazole-4-carboxamide from 5-amino-1-(5-phospho-D-ribosyl)imidazole-4-carboxamide (10-formyl THF route): step 1/1. It functions in the pathway purine metabolism; IMP biosynthesis via de novo pathway; IMP from 5-formamido-1-(5-phospho-D-ribosyl)imidazole-4-carboxamide: step 1/1. The polypeptide is Bifunctional purine biosynthesis protein PurH (Cupriavidus pinatubonensis (strain JMP 134 / LMG 1197) (Cupriavidus necator (strain JMP 134))).